The primary structure comprises 671 residues: tRNA(Met) cytidine acetyltransferase TmcA (671 aa).

ATP contacts are provided by residues Q180, 202-211 (GRGKSALAGQ), and R319. Residues 349–531 (IRFSAFTQAL…SGCYTAMALL (183 aa)) enclose the N-acetyltransferase domain. Acetyl-CoA-binding positions include 461–463 (IAV), 468–474 (QREGIGQ), E499, and R506.

Belongs to the RNA cytidine acetyltransferase family. TmcA subfamily.

It is found in the cytoplasm. It catalyses the reaction cytidine(34) in elongator tRNA(Met) + acetyl-CoA + ATP + H2O = N(4)-acetylcytidine(34) in elongator tRNA(Met) + ADP + phosphate + CoA + H(+). Functionally, catalyzes the formation of N(4)-acetylcytidine (ac(4)C) at the wobble position of tRNA(Met), by using acetyl-CoA as an acetyl donor and ATP (or GTP). The sequence is that of tRNA(Met) cytidine acetyltransferase TmcA from Citrobacter koseri (strain ATCC BAA-895 / CDC 4225-83 / SGSC4696).